We begin with the raw amino-acid sequence, 274 residues long: Putative phosphatase BUsg_029 (274 aa).

Aspartate 8 serves as the catalytic Nucleophile. Aspartate 8 is a binding site for Mg(2+). Leucine 9 provides a ligand contact to phosphate. A Mg(2+)-binding site is contributed by aspartate 10. Phosphate contacts are provided by residues 42–43 (SG) and lysine 191. Aspartate 214 serves as a coordination point for Mg(2+). Phosphate is bound at residue asparagine 217.

This sequence belongs to the HAD-like hydrolase superfamily. Cof family. Mg(2+) is required as a cofactor.

The polypeptide is Putative phosphatase BUsg_029 (Buchnera aphidicola subsp. Schizaphis graminum (strain Sg)).